We begin with the raw amino-acid sequence, 568 residues long: Urease subunit alpha (568 aa).

Residues 130–568 enclose the Urease domain; the sequence is GGIDSHIHFI…LPMAQRYFLF (439 aa). Residues His-135, His-137, and Lys-218 each contribute to the Ni(2+) site. Lys-218 is modified (N6-carboxylysine). Residue His-220 participates in substrate binding. Ni(2+) is bound by residues His-247 and His-273. His-321 acts as the Proton donor in catalysis. Position 361 (Asp-361) interacts with Ni(2+).

Belongs to the metallo-dependent hydrolases superfamily. Urease alpha subunit family. Heterotrimer of UreA (gamma), UreB (beta) and UreC (alpha) subunits. Three heterotrimers associate to form the active enzyme. Ni cation is required as a cofactor. In terms of processing, carboxylation allows a single lysine to coordinate two nickel ions.

The protein localises to the cytoplasm. It carries out the reaction urea + 2 H2O + H(+) = hydrogencarbonate + 2 NH4(+). It participates in nitrogen metabolism; urea degradation; CO(2) and NH(3) from urea (urease route): step 1/1. This chain is Urease subunit alpha, found in Nitrosospira multiformis (strain ATCC 25196 / NCIMB 11849 / C 71).